We begin with the raw amino-acid sequence, 253 residues long: MAGHSKWSQIKRTKAVVDAKRGAVFTRLGREISVAARAGADPDGNFQLRTAINKAKAAGVPAANIERAIAKGCGAGGDGSQAFEEIRYEGYGPGGVAVLVEVLSDNRNRTAAELRLAFSKNGGNLGESGCVGFLFSHRSEVSLNATSAEGIDEDALLEDLLELEADGYELTEEGALVHGPFTALEILQDGLRQRGWSVQDWGHQWHPLNSIDLHQSDQARQCLQLLEALEALDDVRSVSCNLGEFPELENERS.

Belongs to the TACO1 family.

It is found in the cytoplasm. The protein is Probable transcriptional regulatory protein SynRCC307_1833 of Synechococcus sp. (strain RCC307).